The primary structure comprises 1728 residues: Nebulin-related-anchoring protein (1728 aa).

Positions 4-64 (QACSRCGYGV…HAHNPKNNTF (61 aa)) constitute an LIM zinc-binding domain. Nebulin repeat units follow at residues 173–200 (TPAY…ERVS), 201–235 (TFTP…QQRG), 244–271 (TPAY…REMK), 313–340 (TPAY…KMKG), 345–379 (HSLA…NSKG), 386–414 (ETPQ…TQLR), 416–450 (HYDG…HDVV), 484–518 (KFSS…RNKL), 519–553 (NYTL…KTKG), 555–589 (GFEM…KMKG), 599–623 (LLHS…ESKT), 624–658 (HFNL…DYTV), 659–689 (LPED…WMRG), 699–721 (NLEQ…RVDE), 723–757 (KFTS…QSVH), 758–792 (QYTI…KQKA), 794–828 (GFEL…RSRG), 841–866 (QMSH…DTRS), 867–893 (QCHI…VGYR), 898–932 (CFTA…WMKG), 943–960 (VEQA…KYRQ), 966–1000 (KFTS…NVKH), 1001–1035 (HYTQ…RLRD), 1037–1071 (GYKL…RMKG), 1075–1109 (GSRS…HAKA), 1110–1136 (HFHL…QDYR), 1141–1175 (QHTV…FMRG), 1180–1203 (VPGT…KYRQ), 1209–1243 (KYTA…DARH), 1244–1278 (QYTM…NLRA), 1280–1314 (GYKL…KERG), 1318–1352 (GVRN…SSQA), 1353–1379 (QCHL…HDYR), 1384–1418 (EFTA…GMKG), 1425–1446 (QSPQ…KYRK), 1452–1478 (KFTT…RLYR), 1487–1521 (RYTP…QSRA), 1523–1557 (GYDF…RDRG), 1561–1595 (GYRS…KGRS), 1596–1630 (QFHS…QHTS), and 1637–1661 (LKHA…LTRG). Threonine 203 carries the post-translational modification Phosphothreonine. Residue serine 1078 is modified to Phosphoserine.

Interacts with actin, alpha-actinin, KLHL41, TLN1 and VCL. Interacts with CSRP3. As to expression, expressed in cardiac and skeletal muscle. Not detected in kidney, spleen, liver, brain, lung, stomach or uterus.

Functionally, may be involved in anchoring the terminal actin filaments in the myofibril to the membrane and in transmitting tension from the myofibrils to the extracellular matrix. The protein is Nebulin-related-anchoring protein of Mus musculus (Mouse).